The following is a 1068-amino-acid chain: Carbamoyl phosphate synthase large chain (1068 aa).

The carboxyphosphate synthetic domain stretch occupies residues 1-401; the sequence is MPRRTDLHRI…SLLKAVRSLE (401 aa). The ATP site is built by Arg129, Arg169, Gly175, Gly176, Gln208, Ile210, Glu215, Gly241, Val242, His243, Gln284, and Glu298. Positions 133 to 327 constitute an ATP-grasp 1 domain; the sequence is KQLMDELGQP…IAKIAAKIAV (195 aa). Mg(2+) contacts are provided by Gln284, Glu298, and Asn300. Gln284, Glu298, and Asn300 together coordinate Mn(2+). The segment at 402–546 is oligomerization domain; sequence IGVDHLALRE…YSTYEMENES (145 aa). A carbamoyl phosphate synthetic domain region spans residues 547-935; sequence KKSQRPSVLV…ALYKVFEAAN (389 aa). Residues 671–867 enclose the ATP-grasp 2 domain; that stretch reads ESLLAELGIP…MAEVATRIIL (197 aa). 10 residues coordinate ATP: Arg707, Arg746, Leu748, Glu752, Gly777, Val778, His779, Ser780, Gln820, and Glu838. 3 residues coordinate Mg(2+): Gln820, Glu838, and Asn840. Residues Gln820, Glu838, and Asn840 each coordinate Mn(2+). Residues 936–1068 enclose the MGS-like domain; it reads LHVPEYGKIL…ESRVFSTESI (133 aa). Positions 936–1068 are allosteric domain; sequence LHVPEYGKIL…ESRVFSTESI (133 aa).

It belongs to the CarB family. In terms of assembly, composed of two chains; the small (or glutamine) chain promotes the hydrolysis of glutamine to ammonia, which is used by the large (or ammonia) chain to synthesize carbamoyl phosphate. Tetramer of heterodimers (alpha,beta)4. Mg(2+) serves as cofactor. The cofactor is Mn(2+).

The enzyme catalyses hydrogencarbonate + L-glutamine + 2 ATP + H2O = carbamoyl phosphate + L-glutamate + 2 ADP + phosphate + 2 H(+). It catalyses the reaction hydrogencarbonate + NH4(+) + 2 ATP = carbamoyl phosphate + 2 ADP + phosphate + 2 H(+). The protein operates within amino-acid biosynthesis; L-arginine biosynthesis; carbamoyl phosphate from bicarbonate: step 1/1. Its pathway is pyrimidine metabolism; UMP biosynthesis via de novo pathway; (S)-dihydroorotate from bicarbonate: step 1/3. Large subunit of the glutamine-dependent carbamoyl phosphate synthetase (CPSase). CPSase catalyzes the formation of carbamoyl phosphate from the ammonia moiety of glutamine, carbonate, and phosphate donated by ATP, constituting the first step of 2 biosynthetic pathways, one leading to arginine and/or urea and the other to pyrimidine nucleotides. The large subunit (synthetase) binds the substrates ammonia (free or transferred from glutamine from the small subunit), hydrogencarbonate and ATP and carries out an ATP-coupled ligase reaction, activating hydrogencarbonate by forming carboxy phosphate which reacts with ammonia to form carbamoyl phosphate. The sequence is that of Carbamoyl phosphate synthase large chain from Cutibacterium acnes (strain DSM 16379 / KPA171202) (Propionibacterium acnes).